The primary structure comprises 218 residues: Octanoyltransferase (218 aa).

The region spanning 32–218 (GEAAEAIWLL…LRTFPQHFPD (187 aa)) is the BPL/LPL catalytic domain. Residues 71–78 (RGGQYTYH), 151–153 (AIG), and 164–166 (GLS) contribute to the substrate site. The active-site Acyl-thioester intermediate is C182.

The protein belongs to the LipB family.

Its subcellular location is the cytoplasm. The catalysed reaction is octanoyl-[ACP] + L-lysyl-[protein] = N(6)-octanoyl-L-lysyl-[protein] + holo-[ACP] + H(+). It participates in protein modification; protein lipoylation via endogenous pathway; protein N(6)-(lipoyl)lysine from octanoyl-[acyl-carrier-protein]: step 1/2. Its function is as follows. Catalyzes the transfer of endogenously produced octanoic acid from octanoyl-acyl-carrier-protein onto the lipoyl domains of lipoate-dependent enzymes. Lipoyl-ACP can also act as a substrate although octanoyl-ACP is likely to be the physiological substrate. This Cereibacter sphaeroides (strain ATCC 17029 / ATH 2.4.9) (Rhodobacter sphaeroides) protein is Octanoyltransferase.